The following is a 107-amino-acid chain: Parvalbumin beta (107 aa).

At Ser1 the chain carries N-acetylserine. EF-hand domains are found at residues 37–72 and 76–107; these read KSLDDVKKAFYVIDQDKSGFIEEDELKLFLQNFSPS and LTDAETKAFLADGDKDGDGMIGVDEFAAMIKA. The Ca(2+) site is built by Asp50, Asp52, Ser54, Phe56, Glu58, Glu61, Asp89, Asp91, Asp93, Met95, and Glu100.

This sequence belongs to the parvalbumin family.

Its function is as follows. In muscle, parvalbumin is thought to be involved in relaxation after contraction. It binds two calcium ions. In Esox lucius (Northern pike), this protein is Parvalbumin beta.